The sequence spans 404 residues: Translation initiation factor eIF2B subunit gamma (404 aa).

The protein belongs to the eIF-2B gamma/epsilon subunits family. Component of the translation initiation factor 2B (eIF2B) complex which is a heterodecamer of two sets of five different subunits: alpha, beta, gamma, delta and epsilon. Subunits alpha, beta and delta comprise a regulatory subcomplex and subunits epsilon and gamma comprise a catalytic subcomplex. Within the complex, the hexameric regulatory complex resides at the center, with the two heterodimeric catalytic subcomplexes bound on opposite sides.

It is found in the cytoplasm. The protein resides in the cytosol. Acts as a component of the translation initiation factor 2B (eIF2B) complex, which catalyzes the exchange of GDP for GTP on the eukaryotic initiation factor 2 (eIF2) complex gamma subunit. Its guanine nucleotide exchange factor activity is repressed when bound to eIF2 complex phosphorylated on the alpha subunit, thereby limiting the amount of methionyl-initiator methionine tRNA available to the ribosome and consequently global translation is repressed. In Caenorhabditis elegans, this protein is Translation initiation factor eIF2B subunit gamma.